A 34-amino-acid chain; its full sequence is MVSSITQAEIFIALVVAAHAGVLAVRLCVSLYRA.

A helical membrane pass occupies residues 10–32 (IFIALVVAAHAGVLAVRLCVSLY).

It belongs to the PsaM family.

Its subcellular location is the cellular thylakoid membrane. This chain is Photosystem I reaction center subunit XII, found in Synechococcus sp. (strain WH7803).